The sequence spans 162 residues: uncharacterized protein (162 aa).

The next 5 helical transmembrane spans lie at 15-40, 47-66, 76-98, 105-124, and 128-150; these read TIYS…YFLL, ISML…TTAL, YSIL…FLVY, KWLG…DPLL, and GYAV…WLVI.

The protein resides in the cell membrane. This is an uncharacterized protein from Archaeoglobus fulgidus (strain ATCC 49558 / DSM 4304 / JCM 9628 / NBRC 100126 / VC-16).